The following is a 249-amino-acid chain: Methyltransferase 1 (249 aa).

Belongs to the FkbM methyltransferase family.

The protein operates within secondary metabolite biosynthesis. Functionally, methyltransferase; part of the pathway that mediates the biosynthesis of tenellin-type 2-pyridones, iron-chelating compounds involved in iron stress tolerance, competition with the natural competitor fungus Metarhizium robertsii and insect hosts infection. Methylates pyridovericin-N-O-(beta-D-glucopyranoside) produced by the UDP-glucosyltransferase GT1 to yield pyridovericin-N-O-(4-O-methyl-beta-D-glucopyranoside) (PMGP). The pathway begins with the assembly of the polyketide-amino acid backbone by the hybrid PKS-NRPS tenS with the help of the enoyl reductase tenC. These enzymes catalyze the synthesis of the pyrrolidine-2-dione intermediates pretellinin A, 11-hydropretellenin A, 12-hydropretellenin A, 13-hydropretellenin A, 14-hydropretellenin A, 12-oxopretellenin A and prototellinin D. The cytochrome P450 monooxygenase tenA then catalyzes an oxidative ring expansion of pretenellin A and 14-hydropretellenin A to form the 2-pyridone core, leading to pretenellin B and pyridovericin, respectively. The cytochrome P450 monooxygenase tenB is then required for the selective N-hydroxylation of the 2-pyridone nitrogen of yield tellinin and 15-hydroxytellenin (15-HT), respectively. The UDP-glucosyltransferase GT1 and the methyltransferase MT1, located outside the tenS gene cluster, contribute to the stepwise glycosylation and methylation of 15-HT to obtain the glycoside pyridovericin-N-O-(4-O-methyl-beta-D-glucopyranoside) (PMGP). Additional related compounds such as 1-O-methyl-15-HT, (8Z)-1-O-methyl-15-HT, and O-methyltenellin A are also produced but the enzymes involved in their biosynthesis have still to be determined. The sequence is that of Methyltransferase 1 from Beauveria bassiana (strain ARSEF 2860) (White muscardine disease fungus).